Here is a 157-residue protein sequence, read N- to C-terminus: Electron transfer flavoprotein regulatory factor 1 homolog (157 aa).

Belongs to the complex I LYR family.

Its subcellular location is the mitochondrion. This Dictyostelium discoideum (Social amoeba) protein is Electron transfer flavoprotein regulatory factor 1 homolog.